Reading from the N-terminus, the 281-residue chain is Nucleotide-binding protein Patl_0571 (281 aa).

Position 8-15 (Gly8–Ser15) interacts with ATP. Asp56–Asn59 contacts GTP.

Belongs to the RapZ-like family.

Functionally, displays ATPase and GTPase activities. The sequence is that of Nucleotide-binding protein Patl_0571 from Pseudoalteromonas atlantica (strain T6c / ATCC BAA-1087).